The following is a 262-amino-acid chain: ATP synthase subunit a (262 aa).

The next 6 membrane-spanning stretches (helical) occupy residues 24 to 44 (AVHLDTLFFSLLAGVIFLFVF), 84 to 104 (VIAPLALTIFCWVFIMNAIDL), 129 to 149 (DISATLGMSICVFFLILFYTV), 165 to 185 (PFNHWVFIPVNFILETVTLLA), 194 to 214 (LFGNMYAGELIFILIAVMYMA), and 228 to 248 (LVWAIFHILVITLQAFIFMML).

This sequence belongs to the ATPase A chain family. F-type ATPases have 2 components, CF(1) - the catalytic core - and CF(0) - the membrane proton channel. CF(1) has five subunits: alpha(3), beta(3), gamma(1), delta(1), epsilon(1). CF(0) has three main subunits: a(1), b(2) and c(9-12). The alpha and beta chains form an alternating ring which encloses part of the gamma chain. CF(1) is attached to CF(0) by a central stalk formed by the gamma and epsilon chains, while a peripheral stalk is formed by the delta and b chains.

It localises to the cell inner membrane. Key component of the proton channel; it plays a direct role in the translocation of protons across the membrane. The sequence is that of ATP synthase subunit a from Actinobacillus pleuropneumoniae serotype 7 (strain AP76).